We begin with the raw amino-acid sequence, 262 residues long: MKNITVSSIKKKKNQEKITMITAYDALFARLFDGEVDILLVGDSLAMSFGGEEDTLPIGMDEMIYHTKAVCRGAEKSLVVIDMPFGSYDTKEKALHNAIRAYKESGASAVKLEGGIQKAETIALLSENGIAVMGHIGLKPQFVRAEGGYKVKGKEEGEAQSLLRDAKALEESGVFALVLEGVKAEVAQEVARSVSVPVIGIGSGSQVDGQVLVWSDMLGFFEGFTPKFVRRYLEGASLIRQGVREYAKDVREGRFPSEAESY.

2 residues coordinate Mg(2+): D43 and D82. 3-methyl-2-oxobutanoate is bound by residues 43-44, D82, and K111; that span reads DS. A Mg(2+)-binding site is contributed by E113. E180 (proton acceptor) is an active-site residue.

It belongs to the PanB family. Homodecamer; pentamer of dimers. It depends on Mg(2+) as a cofactor.

Its subcellular location is the cytoplasm. The catalysed reaction is 3-methyl-2-oxobutanoate + (6R)-5,10-methylene-5,6,7,8-tetrahydrofolate + H2O = 2-dehydropantoate + (6S)-5,6,7,8-tetrahydrofolate. Its pathway is cofactor biosynthesis; (R)-pantothenate biosynthesis; (R)-pantoate from 3-methyl-2-oxobutanoate: step 1/2. Catalyzes the reversible reaction in which hydroxymethyl group from 5,10-methylenetetrahydrofolate is transferred onto alpha-ketoisovalerate to form ketopantoate. The polypeptide is 3-methyl-2-oxobutanoate hydroxymethyltransferase (Wolinella succinogenes (strain ATCC 29543 / DSM 1740 / CCUG 13145 / JCM 31913 / LMG 7466 / NCTC 11488 / FDC 602W) (Vibrio succinogenes)).